Consider the following 662-residue polypeptide: UvrABC system protein B (662 aa).

The Helicase ATP-binding domain maps to 31 to 188 (DNIEGGEKAQ…NDLVDIQFER (158 aa)). Residue 44–51 (GATGTGKT) participates in ATP binding. The Beta-hairpin motif lies at 97–120 (YYDYYQPEAYVPSSDTYIEKDSSV). The 167-residue stretch at 435–601 (QIDDLLGEIN…TIKKEIRDLI (167 aa)) folds into the Helicase C-terminal domain. The region spanning 626 to 661 (KELVKKLEKQMQEAVEVLDFELAAQIRDMMLEVKAL) is the UVR domain.

It belongs to the UvrB family. As to quaternary structure, forms a heterotetramer with UvrA during the search for lesions. Interacts with UvrC in an incision complex.

The protein resides in the cytoplasm. Its function is as follows. The UvrABC repair system catalyzes the recognition and processing of DNA lesions. A damage recognition complex composed of 2 UvrA and 2 UvrB subunits scans DNA for abnormalities. Upon binding of the UvrA(2)B(2) complex to a putative damaged site, the DNA wraps around one UvrB monomer. DNA wrap is dependent on ATP binding by UvrB and probably causes local melting of the DNA helix, facilitating insertion of UvrB beta-hairpin between the DNA strands. Then UvrB probes one DNA strand for the presence of a lesion. If a lesion is found the UvrA subunits dissociate and the UvrB-DNA preincision complex is formed. This complex is subsequently bound by UvrC and the second UvrB is released. If no lesion is found, the DNA wraps around the other UvrB subunit that will check the other stand for damage. This Streptococcus pneumoniae (strain Hungary19A-6) protein is UvrABC system protein B.